The primary structure comprises 375 residues: uncharacterized protein (375 aa).

The protein belongs to the IMPDH/GMPR family.

This is an uncharacterized protein from Mycobacterium tuberculosis (strain CDC 1551 / Oshkosh).